We begin with the raw amino-acid sequence, 213 residues long: Pyrrolidone-carboxylate peptidase (213 aa).

Active-site residues include Glu80, Cys143, and His165.

It belongs to the peptidase C15 family. In terms of assembly, homotetramer.

The protein resides in the cytoplasm. It carries out the reaction Release of an N-terminal pyroglutamyl group from a polypeptide, the second amino acid generally not being Pro.. Removes 5-oxoproline from various penultimate amino acid residues except L-proline. In Erwinia tasmaniensis (strain DSM 17950 / CFBP 7177 / CIP 109463 / NCPPB 4357 / Et1/99), this protein is Pyrrolidone-carboxylate peptidase.